Reading from the N-terminus, the 133-residue chain is Ribosome-binding factor A (133 aa).

This sequence belongs to the RbfA family. As to quaternary structure, monomer. Binds 30S ribosomal subunits, but not 50S ribosomal subunits or 70S ribosomes.

Its subcellular location is the cytoplasm. In terms of biological role, one of several proteins that assist in the late maturation steps of the functional core of the 30S ribosomal subunit. Associates with free 30S ribosomal subunits (but not with 30S subunits that are part of 70S ribosomes or polysomes). Required for efficient processing of 16S rRNA. May interact with the 5'-terminal helix region of 16S rRNA. The protein is Ribosome-binding factor A of Salmonella typhi.